Reading from the N-terminus, the 302-residue chain is Recombination-associated protein RdgC (302 aa).

It belongs to the RdgC family.

Its subcellular location is the cytoplasm. It is found in the nucleoid. Functionally, may be involved in recombination. The chain is Recombination-associated protein RdgC from Actinobacillus succinogenes (strain ATCC 55618 / DSM 22257 / CCUG 43843 / 130Z).